The primary structure comprises 364 residues: MDGSVASSSVWDTQKVYKHHEQQNVAQTRPKYREGRRLKAVKVYTINLESRYLLVQGVPAIGVMAELVQLFALYGVIEEYRPLDEYPAEQFTEVYLIQFQKLTSARAAKRHTDEKSFFGGQLHVCYAPEYETVEETKQKLQDRRRYVNWASQNAAKLHSQQAEVNTESSSSTDTRTAEAPIMQKNPEEARRENVNSDYMGFPLLPLPPTADISYRLQNHFTQPSQLQWTKETTEDKMGSLHNFIPPVQKTSTQSESSSSSGVKEGDLRQKQKISTPSIRFMPRTTHLESRKRKLDEQTFFLKEADKTGVLIGPKLPELPKLDMEDSSLNVTANLIRNTMTKAASVPEAKPVQAKHTTPKPRRRI.

The RRM domain occupies 51 to 129; sequence RYLLVQGVPA…GQLHVCYAPE (79 aa). Residues 157–174 show a composition bias toward polar residues; the sequence is LHSQQAEVNTESSSSTDT. Disordered stretches follow at residues 157–191, 239–291, and 343–364; these read LHSQQAEVNTESSSSTDTRTAEAPIMQKNPEEARR, SLHN…ESRK, and ASVPEAKPVQAKHTTPKPRRRI. The segment covering 247–262 has biased composition (low complexity); sequence VQKTSTQSESSSSSGV.

This sequence belongs to the RBM48 family. In terms of assembly, component of the minor spliceosome, which splices U12-type introns.

In terms of biological role, as a component of the minor spliceosome, involved in the splicing of U12-type introns in pre-mRNAs. This is RNA-binding protein 48 (rbm48) from Danio rerio (Zebrafish).